The sequence spans 467 residues: Sialic acid-binding Ig-like lectin 12 (467 aa).

An N-terminal signal peptide occupies residues 1 to 18; that stretch reads MLLLLLLLLLWGIKGVEG. Residues 19 to 353 lie on the Extracellular side of the membrane; sequence QNPQEVFTLN…ATLSEMMMGT (335 aa). The region spanning 21-141 is the Ig-like V-type domain; it reads PQEVFTLNVE…TKYNYMWDKM (121 aa). 3 disulfide bridges follow: Cys-40-Cys-176, Cys-45-Cys-108, and Cys-170-Cys-219. Asn-46 carries N-linked (GlcNAc...) asparagine glycosylation. Residue Arg-126 participates in N-acetylneuraminate binding. Ig-like C2-type domains follow at residues 152-239 and 242-339; these read PQIL…LNVS and PKNL…LSLS. Asn-167, Asn-197, Asn-216, Asn-227, Asn-237, Asn-244, Asn-262, Asn-287, and Asn-294 each carry an N-linked (GlcNAc...) asparagine glycan. Cysteines 278 and 323 form a disulfide. Residues 354 to 374 traverse the membrane as a helical segment; the sequence is FVGSGVTALLFLSVCILLLAV. The Cytoplasmic portion of the chain corresponds to 375-467; the sequence is RSYRRKPARP…IKFPQRTAWP (93 aa). The ITIM motif motif lies at 430-435; sequence IHYATL. Phosphotyrosine occurs at positions 432 and 455. The SLAM-like motif signature appears at 453-458; it reads TEYSEI.

The protein belongs to the immunoglobulin superfamily. SIGLEC (sialic acid binding Ig-like lectin) family. In terms of assembly, homodimer; disulfide-linked. Interacts with PTPN6/SHP-1 and PTPN11/SHP-2 upon phosphorylation. In terms of processing, phosphorylation of Tyr-432 is required for binding to PTPN6 and PTPN11. Phosphorylation of Tyr-455 is involved in binding to PTPN6. Tyr-432 needs to be phosphorylated prior to Tyr-455. In terms of tissue distribution, expressed by monocytic/myeloid lineage cells. Found at higher levels in spleen, liver and heart. Found at lower levels in kidney and lung.

The protein localises to the membrane. In terms of biological role, putative adhesion molecule that mediates sialic-acid dependent binding to cells. The sialic acid recognition site may be masked by cis interactions with sialic acids on the same cell surface. In the immune response, may act as an inhibitory receptor upon ligand induced tyrosine phosphorylation by recruiting cytoplasmic phosphatase(s) via their SH2 domain(s) that block signal transduction through dephosphorylation of signaling molecules. This chain is Sialic acid-binding Ig-like lectin 12 (Siglec12), found in Mus musculus (Mouse).